Consider the following 896-residue polypeptide: Serine/threonine-protein kinase TAO3 (896 aa).

The Protein kinase domain occupies 24–277; that stretch reads FVDLHEIGHG…SLELLRHDFV (254 aa). Residues 30–38 and K53 each bind ATP; that span reads IGHGSFGAV. The active-site Proton acceptor is the D147. 2 disordered regions span residues 316-366 and 403-423; these read SRNG…SVNS and DEADHRDPRPELRPTQSVQSQ. A compositionally biased stretch (polar residues) spans 334–348; the sequence is GTSLTRKMDSLGSNH. Positions 349–366 are enriched in low complexity; that stretch reads SIPSTSVSTGSQSSSVNS. Residues 403–414 are compositionally biased toward basic and acidic residues; that stretch reads DEADHRDPRPEL. Coiled coils occupy residues 450 to 513, 545 to 650, and 752 to 873; these read EQEN…SKRQ, SFLE…LIRQ, and LKSL…IETF. Positions 565 to 587 are enriched in basic and acidic residues; that stretch reads LNEDHSTPKKEKQERISKHKENL. Positions 565-593 are disordered; it reads LNEDHSTPKKEKQERISKHKENLQHTQAE.

It belongs to the protein kinase superfamily. STE Ser/Thr protein kinase family. STE20 subfamily.

Its subcellular location is the cytoplasm. The protein localises to the cell membrane. It localises to the membrane raft. It is found in the lipid droplet. It catalyses the reaction L-seryl-[protein] + ATP = O-phospho-L-seryl-[protein] + ADP + H(+). The enzyme catalyses L-threonyl-[protein] + ATP = O-phospho-L-threonyl-[protein] + ADP + H(+). Serine/threonine-protein kinase that acts as a regulator of the p38/MAPK14 stress-activated MAPK cascade and of the MAPK8/JNK cascade. In response to DNA damage, involved in the G2/M transition DNA damage checkpoint by activating the p38/MAPK14 stress-activated MAPK cascade, probably by mediating phosphorylation of upstream MAP kinase kinases. Inhibits basal activity of the MAPK8/JNK cascade. This chain is Serine/threonine-protein kinase TAO3 (taok3), found in Xenopus laevis (African clawed frog).